A 309-amino-acid polypeptide reads, in one-letter code: MTTRWLEITCDIPADLADILASYLGELSGTGVCTENLDVDAFSTDEITLSAIKTVKAYFSEDEDVDARLEEIQNFLDRLAEQHPGLSIPRPIISTVQSEDWSSSWKANFKPLRVGRRLMIVPTWEEPPPYPDDIVLRLDPGMAFGTGGHETTRLCLELLEEIMDGMPILLTPAVLDLGTGSGILAMAAVRLGAGRVVAVDIDPQAVEVARENLALNDLTDQVECDTTPLEALPGTFDVILANILAEELVRLAPQLIQRLSVGGMLVLSGILAEREQLVRAGFACQELEYRETRRQGEWVAMVYRRAARA.

4 residues coordinate S-adenosyl-L-methionine: T152, G178, D200, and N242.

It belongs to the methyltransferase superfamily. PrmA family.

Its subcellular location is the cytoplasm. It carries out the reaction L-lysyl-[protein] + 3 S-adenosyl-L-methionine = N(6),N(6),N(6)-trimethyl-L-lysyl-[protein] + 3 S-adenosyl-L-homocysteine + 3 H(+). Its function is as follows. Methylates ribosomal protein L11. The chain is Ribosomal protein L11 methyltransferase from Pelobacter propionicus (strain DSM 2379 / NBRC 103807 / OttBd1).